We begin with the raw amino-acid sequence, 539 residues long: Chaperonin GroEL (539 aa).

ATP-binding positions include 30-33, lysine 51, 87-91, glycine 415, 479-481, and aspartate 495; these read TLGP, DGTTT, and NAA.

It belongs to the chaperonin (HSP60) family. As to quaternary structure, forms a cylinder of 14 subunits composed of two heptameric rings stacked back-to-back. Interacts with the co-chaperonin GroES.

The protein resides in the cytoplasm. It carries out the reaction ATP + H2O + a folded polypeptide = ADP + phosphate + an unfolded polypeptide.. In terms of biological role, together with its co-chaperonin GroES, plays an essential role in assisting protein folding. The GroEL-GroES system forms a nano-cage that allows encapsulation of the non-native substrate proteins and provides a physical environment optimized to promote and accelerate protein folding. The chain is Chaperonin GroEL from Kluyvera intermedia (Enterobacter intermedius).